The sequence spans 874 residues: MSIPSILRKETLKKKDKNIDLQENNINDLVVSASRVIAPLWPISTFAAHHPWMGLEKQSFEQVANWLKEARNVDIYPSASMIHSAKAKGEIEESFLQIALSRWLDSQSFHMPRETAERFCQEALKLERLPSSLLSSPELNKLAEEINYVNTGSMKDSSMQPISSLIENQNGDNLSDILNYHIIKWCKLYLDDAGASWAMPNREKGFYRAWQHLITFDPALSKTERKVLKDWPEDALIALTKALSELGISESNMQAYLEGHLLSLPGWAGMIRWRSQQSIEEQELLIEYLAVRLSMELAIVKPYLPLKNQKVEKKVSIVPLIASWIYWGDISIEKWLQMSATEQSELLAFAYRFDENTRKKLWLEAWEQTHAEQLREKIASKQRATHDKKRVVAQLAFCIDVRSEPFRRHLEKLGPFETFGIAGFFGLPIATTELGSNDSHPSLPVILKPKHQIKELTDENECKSYEQRKMVGSSVRYTFKTMKQNVLTSMLLPEVSGPLLGLQMVTRSFVPRRVGGFIRNLRKNMLQKPDTTFSLNHVHDTNCEIPIGFTKEEKVNYVRQTLKMVGLTEGFAPLVVMCGHSSQSTNNPYAAALECGACGGAAGGFNARVFATLCNLPEVREALSAEGIKIPDDTIFAAAEHKTTVDELEWIYVPELSETAQEAFDCIEAIMPNVSQHANRERLMQLPHFKTKIKNPSKEAHRFAEDWSEIRPEWGLARNASFIIGQRELTQECDLEGRAFLHNYDWKQDESGDILANIIAGPGTVAQWINLQYYASTVAPHYYGSGNKATQTVTAGLGVMQGNASDLLPGLPWQSVMQSDRETYHSPLRLLIVIQAPTKYIERLLNNNFTFREKVQNGWVRLASVDPEGRWKNW.

Zn(2+) contacts are provided by cysteine 398, aspartate 400, histidine 580, and cysteine 595.

It belongs to the inorganic carbon transporter (TC 9.A.2) DabA family. In terms of assembly, forms a complex with DabB. Zn(2+) is required as a cofactor.

It localises to the cell membrane. Its function is as follows. Part of an energy-coupled inorganic carbon pump. The sequence is that of Probable inorganic carbon transporter subunit DabA from Bacillus anthracis (strain A0248).